We begin with the raw amino-acid sequence, 257 residues long: Meiotically up-regulated gene 14 protein (257 aa).

Its subcellular location is the cytoplasm. The protein localises to the nucleus. In terms of biological role, has a role in meiosis. In Schizosaccharomyces pombe (strain 972 / ATCC 24843) (Fission yeast), this protein is Meiotically up-regulated gene 14 protein (mug14).